Consider the following 1406-residue polypeptide: EF-hand calcium-binding domain-containing protein 5 (1406 aa).

The segment at 255–655 (NKDLPQQQRD…KACEPKPQHV (401 aa)) is disordered. 8 stretches are compositionally biased toward polar residues: residues 258–294 (LPQQ…SLTG), 322–334 (RRSS…QQRG), 342–354 (RRSS…QQRG), 362–373 (RRSSTVEQTRQR), 382–393 (RRSSTVEQTQRR), 402–414 (RRSS…QQRG), 422–434 (RRSS…QQRG), and 442–464 (RRSS…SLPE). The span at 465–477 (QESHRGSITEGSH) shows a compositional bias: basic and acidic residues. The segment covering 501 to 513 (DDSGSAGSRRGSG) has biased composition (low complexity). The span at 564–577 (QELDEDSTPQLEDD) shows a compositional bias: acidic residues. 2 stretches are compositionally biased toward basic and acidic residues: residues 578–598 (SALK…EEKP) and 638–655 (SKRD…PQHV). One can recognise an EF-hand domain in the interval 773 to 808 (RRRILLQAIFEKWDNDGSGFLDLNEVDDLLYTYKEG). Residues Asp-786, Asp-788, Ser-790, and Glu-797 each contribute to the Ca(2+) site.

This is EF-hand calcium-binding domain-containing protein 5 (Efcab5) from Mus musculus (Mouse).